The primary structure comprises 136 residues: Heme-binding protein Rv0203 (136 aa).

The signal sequence occupies residues 1–27 (MKTGTATTRRRLLAVLIALALPGAAVA). Cys-41 and Cys-115 form a disulfide bridge. The heme site is built by Tyr-60, His-64, and His-90.

As to quaternary structure, dimer of dimers.

The protein localises to the secreted. Part of a heme-iron acquisition system. Acts by binding heme and delivering it to the membrane proteins MmpL3 and MmpL11. Can use free heme or heme from host hemoglobin. This Mycobacterium tuberculosis (strain ATCC 25618 / H37Rv) protein is Heme-binding protein Rv0203.